The chain runs to 249 residues: Type I iodothyronine deiodinase (249 aa).

Residues 1-12 are Extracellular-facing; sequence MGLPQPGLWLKR. Residues 13 to 33 form a helical; Signal-anchor for type III membrane protein membrane-spanning segment; sequence LWVLLEVAVHVVVGKVLLILF. Over 34–249 the chain is Cytoplasmic; sequence PDRVKRNILA…VRAVLEKLHS (216 aa). U126 is a catalytic residue. A non-standard amino acid (selenocysteine) is located at residue U126.

The protein belongs to the iodothyronine deiodinase family. As to quaternary structure, predominantly monomer. Can form homodimers but homodimerization is not essential for enzyme activity.

The protein resides in the cell membrane. The protein localises to the endoplasmic reticulum membrane. It is found in the basolateral cell membrane. It carries out the reaction 3,3',5-triiodo-L-thyronine + iodide + A + H(+) = L-thyroxine + AH2. The catalysed reaction is 3,3',5'-triiodo-L-thyronine + iodide + A + H(+) = L-thyroxine + AH2. It catalyses the reaction 3,3'-diiodo-L-thyronine + iodide + A + H(+) = 3,3',5'-triiodo-L-thyronine + AH2. The enzyme catalyses 3,3'-diiodo-L-thyronine + iodide + A + H(+) = 3,3',5-triiodo-L-thyronine + AH2. It carries out the reaction 3'-iodo-L-thyronine + iodide + A + H(+) = 3',5'-diiodo-L-thyronine + AH2. The catalysed reaction is 3-iodo-L-thyronine + iodide + A + H(+) = 3,5-diiodo-L-thyronine + AH2. It catalyses the reaction 3-iodo-L-thyronine + iodide + A + H(+) = 3,3'-diiodo-L-thyronine + AH2. The enzyme catalyses 3,3'-diiodothyronamine + iodide + A + H(+) = 3,3',5'-triiodothyronamine + AH2. It carries out the reaction 3'-iodothyronamine + iodide + A + H(+) = 3',5'-diiodothyronamine + AH2. The catalysed reaction is 3-iodothyronamine + iodide + A + H(+) = 3,3'-diiodothyronamine + AH2. It catalyses the reaction 3,3'-diiodothyronamine + iodide + A + H(+) = 3,3',5-triiodothyronamine + AH2. The enzyme catalyses 3-iodothyronamine + iodide + A + H(+) = 3,5-diiodothyronamine + AH2. It carries out the reaction 3,3'-diiodo-L-thyronine sulfate + iodide + A + H(+) = 3,3',5'-triiodo-L-thyronine sulfate + AH2. The catalysed reaction is 3,3',5'-triiodo-L-thyronine sulfate + iodide + A + H(+) = L-thyroxine sulfate + AH2. It catalyses the reaction 3,3'-diiodo-L-thyronine sulfate + iodide + A + H(+) = 3,3',5-triiodo-L-thyronine sulfate + AH2. Deiodination of substrates 3,3',5'-triiodothyronine, 3,3',5'-triiodothyronamine and 3',5'- diiodothyronamine are inhibited by 6n-propyl-2-thiouracil (PTU). In terms of biological role, plays a crucial role in the metabolism of thyroid hormones (TH) and has specific roles in TH activation and inactivation by deiodination. Catalyzes the deiodination of L-thyroxine (T4) to 3,5,3'-triiodothyronine (T3), 3,3',5'-triiodothyronine (rT3) to 3,3'-diiodothyronine (3,3'-T2) and 3',5'-diiodothyronine (3',5'-T2) to 3'-monoiodothyronine (3'-T1) via outer-ring deiodination (ORD). Catalyzes the deiodination of T4 to 3,3',5'-triiodothyronine (rT3) via inner-ring deiodination (IRD). Catalyzes the deiodination of T3 to 3,3'-T2, 3,5-diiodothyronine (3,5-T2) to 3- monoiodothyronine (3-T1) and 3,3'-T2 to 3-T1 via IRD. Catalyzes the phenolic ring deiodinations of 3,3',5'-triiodothyronamine and 3',5'-diiodothyronamine. Catalyzes the phenolic ring deiodination of 3,3'-diiodothyronamine and tyrosyl ring deiodinations of 3,5,3'-triiodothyronamine and 3,5-diiodothyronamine. Catalyzes the deiodination of L-thyroxine sulfate and 3,3',5-triiodo-L-thyronine sulfate via IRD and of 3,3',5'-triiodo-L-thyronine sulfate via ORD. This chain is Type I iodothyronine deiodinase (DIO1), found in Homo sapiens (Human).